A 492-amino-acid polypeptide reads, in one-letter code: Aspartyl/glutamyl-tRNA(Asn/Gln) amidotransferase subunit B (492 aa).

It belongs to the GatB/GatE family. GatB subfamily. Heterotrimer of A, B and C subunits.

It catalyses the reaction L-glutamyl-tRNA(Gln) + L-glutamine + ATP + H2O = L-glutaminyl-tRNA(Gln) + L-glutamate + ADP + phosphate + H(+). It carries out the reaction L-aspartyl-tRNA(Asn) + L-glutamine + ATP + H2O = L-asparaginyl-tRNA(Asn) + L-glutamate + ADP + phosphate + 2 H(+). In terms of biological role, allows the formation of correctly charged Asn-tRNA(Asn) or Gln-tRNA(Gln) through the transamidation of misacylated Asp-tRNA(Asn) or Glu-tRNA(Gln) in organisms which lack either or both of asparaginyl-tRNA or glutaminyl-tRNA synthetases. The reaction takes place in the presence of glutamine and ATP through an activated phospho-Asp-tRNA(Asn) or phospho-Glu-tRNA(Gln). The chain is Aspartyl/glutamyl-tRNA(Asn/Gln) amidotransferase subunit B from Azorhizobium caulinodans (strain ATCC 43989 / DSM 5975 / JCM 20966 / LMG 6465 / NBRC 14845 / NCIMB 13405 / ORS 571).